Consider the following 1453-residue polypeptide: Scavenger receptor cysteine-rich type 1 protein M160 (1453 aa).

The first 40 residues, 1 to 40 (MMLPQNSWHIDFGRCCCHQNLFSAVVTCILLLNSCFLISS), serve as a signal peptide directing secretion. Residues 41–1359 (FNGTDLELRL…LKSLNASSGH (1319 aa)) are Extracellular-facing. Asn42, Asn78, Asn120, and Asn161 each carry an N-linked (GlcNAc...) asparagine glycan. SRCR domains follow at residues 48–148 (LRLV…VNCY), 155–255 (LRLV…LTCY), 262–362 (LRLV…VICS), 369–469 (LRLA…VICS), 476–576 (LRLV…VTCS), 583–683 (LRLV…VICS), 690–790 (LRLV…LICS), 795–895 (PRLV…VVCS), and 900–1000 (VRLV…VICT). Disulfide bonds link Cys73–Cys137, Cys86–Cys147, and Cys117–Cys127. 6 disulfides stabilise this stretch: Cys180–Cys244, Cys193–Cys254, Cys224–Cys234, Cys287–Cys351, Cys300–Cys361, and Cys331–Cys341. 5 N-linked (GlcNAc...) asparagine glycosylation sites follow: Asn334, Asn377, Asn441, Asn548, and Asn637. Disulfide bonds link Cys394–Cys458, Cys407–Cys468, Cys438–Cys448, Cys501–Cys565, Cys514–Cys575, Cys545–Cys555, Cys608–Cys672, Cys621–Cys682, Cys652–Cys662, Cys715–Cys779, Cys728–Cys789, Cys759–Cys769, Cys820–Cys884, Cys833–Cys894, Cys864–Cys874, Cys925–Cys989, Cys938–Cys999, and Cys969–Cys979. Asn972, Asn1013, Asn1084, and Asn1104 each carry an N-linked (GlcNAc...) asparagine glycan. SRCR domains are found at residues 1036–1136 (LRLV…VICS), 1141–1243 (LRLY…ITCE), and 1246–1346 (IRVR…VRCS). 3 disulfides stabilise this stretch: Cys1061–Cys1125, Cys1074–Cys1135, and Cys1105–Cys1115. N-linked (GlcNAc...) asparagine glycans are attached at residues Asn1161 and Asn1171. 5 disulfide bridges follow: Cys1181-Cys1242, Cys1212-Cys1222, Cys1271-Cys1335, Cys1284-Cys1345, and Cys1315-Cys1325. Residues Asn1318 and Asn1354 are each glycosylated (N-linked (GlcNAc...) asparagine). A helical membrane pass occupies residues 1360-1380 (LALILSSIFGLLLLVLFILFL). The Cytoplasmic portion of the chain corresponds to 1381 to 1453 (TWCRVQKQKH…GVLPASEATK (73 aa)). Residues 1418 to 1435 (EDPHGTRTSDDTPNHGCE) are compositionally biased toward basic and acidic residues. The disordered stretch occupies residues 1418-1453 (EDPHGTRTSDDTPNHGCEDASDTSLLGVLPASEATK).

In terms of tissue distribution, isoform 1 is highly expressed in the spleen, lymph nodes, thymus, and fetal liver and weakly expressed in bone marrow and no expression was found in peripheral blood leukocytes. Isoform 1 expression is restricted to the monocyte and macrophage cell lines. Isoform 2 is only expressed in spleen.

It is found in the cell membrane. It localises to the secreted. This is Scavenger receptor cysteine-rich type 1 protein M160 (CD163L1) from Homo sapiens (Human).